The following is a 149-amino-acid chain: Large ribosomal subunit protein bL9 (149 aa).

This sequence belongs to the bacterial ribosomal protein bL9 family.

Functionally, binds to the 23S rRNA. This chain is Large ribosomal subunit protein bL9, found in Syntrophus aciditrophicus (strain SB).